A 414-amino-acid polypeptide reads, in one-letter code: Protein PHLOEM PROTEIN 2-LIKE A10 (414 aa).

2 helical membrane passes run 20–40 (WLIFMAISGVSGYGAYKVYHL) and 379–399 (YVGAKSSVIITVCLALYLHII).

It is found in the membrane. This chain is Protein PHLOEM PROTEIN 2-LIKE A10 (PP2A10), found in Arabidopsis thaliana (Mouse-ear cress).